The sequence spans 100 residues: Small cysteine and glycine repeat-containing protein 3 (100 aa).

The tract at residues 4-82 (CGCGSCGGCG…RRTCRSCGCG (79 aa)) is 13 X 2 AA repeats of CG.

Belongs to the KRTAP type 28 family.

Functionally, in the hair cortex, hair keratin intermediate filaments are embedded in an interfilamentous matrix, consisting of hair keratin-associated proteins (KRTAP), which are essential for the formation of a rigid and resistant hair shaft through their extensive disulfide bond cross-linking with abundant cysteine residues of hair keratins. The matrix proteins include the high-sulfur and high-glycine-tyrosine keratins. The polypeptide is Small cysteine and glycine repeat-containing protein 3 (Homo sapiens (Human)).